A 216-amino-acid polypeptide reads, in one-letter code: Heart- and neural crest derivatives-expressed protein 2 (216 aa).

Residues 74–115 (MDHSHYGGVPPGSGPPGLGGPRPVKRRGTANRKERRRTQSIN) are disordered. Positions 82–93 (VPPGSGPPGLGG) are enriched in gly residues. The span at 96-111 (PVKRRGTANRKERRRT) shows a compositional bias: basic residues. Positions 98-150 (KRRGTANRKERRRTQSINSAFAELRECIPNVPADTKLSKIKTLRLATSYIAYL) constitute a bHLH domain.

In terms of assembly, efficient DNA binding requires dimerization with another bHLH protein.

Its subcellular location is the nucleus. In terms of biological role, essential for cardiac morphogenesis. Binds DNA on E-box consensus sequence 5'-CANNTG-3'. Plays an important role in limb development, particularly in the establishment of anterior-posterior polarization of the limb bud. This is Heart- and neural crest derivatives-expressed protein 2 (HAND2) from Gallus gallus (Chicken).